A 559-amino-acid chain; its full sequence is Potassium-transporting ATPase potassium-binding subunit (559 aa).

Transmembrane regions (helical) follow at residues 5–25 (GFLL…PLGS), 27–47 (LARL…RILW), 63–83 (LLAL…LLFW), 132–152 (GLTV…FALI), 170–190 (LVRI…LFFI), 253–273 (LAQM…FGEA), 283–303 (LLWA…WAEV), 327–347 (FGVL…CGAV), 356–376 (ALGG…FGGV), 379–399 (GLYG…LMIG), 416–436 (MTAL…ALAM), 484–504 (LLAF…MAIA), and 524–544 (GALF…LTFI).

Belongs to the KdpA family. As to quaternary structure, the system is composed of three essential subunits: KdpA, KdpB and KdpC.

It localises to the cell inner membrane. Functionally, part of the high-affinity ATP-driven potassium transport (or Kdp) system, which catalyzes the hydrolysis of ATP coupled with the electrogenic transport of potassium into the cytoplasm. This subunit binds the periplasmic potassium ions and delivers the ions to the membrane domain of KdpB through an intramembrane tunnel. The chain is Potassium-transporting ATPase potassium-binding subunit from Salmonella choleraesuis (strain SC-B67).